Here is an 853-residue protein sequence, read N- to C-terminus: Auxin response factor 23 (853 aa).

The tract at residues 121–141 is disordered; sequence KQQEDNGSTEEEVPSAPAAGH. The TF-B3 DNA-binding region spans 149–251; sequence FCKTLTASDT…ELRVGVRRAM (103 aa). Disordered stretches follow at residues 422–471 and 647–723; these read ESEP…NNTP and PAKS…QGVS. A compositionally biased stretch (polar residues) spans 425-455; sequence PNGTQRTFQTQENATPKSGFGNSSELESAQK. Residues 672 to 686 show a composition bias toward basic and acidic residues; that stretch reads EWRRPDVTEVEKCSD. Over residues 706-723 the composition is skewed to polar residues; that stretch reads PSSQQASRNMSCKSQGVS. The 85-residue stretch at 725–809 folds into the PB1 domain; that stretch reads RSCKKVHKQG…HKIFIYTREE (85 aa). The interval 815–853 is disordered; it reads PGTLNSRSEDSHANSMERGSVGREMRGCLSTSSLNSENC. The segment covering 843 to 853 has biased composition (polar residues); it reads LSTSSLNSENC.

Belongs to the ARF family. Homodimers and heterodimers.

It is found in the nucleus. Auxin response factors (ARFs) are transcriptional factors that bind specifically to the DNA sequence 5'-TGTCTC-3' found in the auxin-responsive promoter elements (AuxREs). The protein is Auxin response factor 23 (ARF23) of Oryza sativa subsp. indica (Rice).